A 718-amino-acid polypeptide reads, in one-letter code: Protein spire homolog 2 (718 aa).

Disordered regions lie at residues 1 to 22 (MARA…ARPE) and 143 to 166 (DSSC…EGGP). Residues 10-21 (AAPERAGGAARP) are compositionally biased toward low complexity. Residues 26-207 (LSLEEVLKVY…RALFVETLEL (182 aa)) form the KIND domain. 3 consecutive WH2 domains span residues 251-265 (QLMR…LKKV), 281-299 (PFEM…LRKV), and 345-362 (LHEK…LRPV). S374 bears the Phosphoserine mark. Positions 397-434 (TDTGSGSQRPRPRVLLKAPTLAEMEEMNTSEEEESPCG) are disordered. Residues 419-432 (EMEEMNTSEEEESP) are compositionally biased toward acidic residues. A phosphoserine mark is found at S443, S445, and S479. Positions 456–518 (MASGLQSAAQ…SSLSSVDGPE (63 aa)) are disordered. Residues 496–513 (SGQSQPLPSSALPSSLSS) show a composition bias toward low complexity. The tract at residues 538-558 (LALTVEEVVDVRRVLVKAEME) is spir-box.

Belongs to the spire family. In terms of tissue distribution, detected in oocytes.

The protein resides in the cytoplasm. The protein localises to the cytoskeleton. Its subcellular location is the cytosol. It localises to the cell membrane. It is found in the cytoplasmic vesicle membrane. In terms of biological role, acts as an actin nucleation factor, remains associated with the slow-growing pointed end of the new filament. Involved in intracellular vesicle transport along actin fibers, providing a novel link between actin cytoskeleton dynamics and intracellular transport. Required for asymmetric spindle positioning and asymmetric cell division during oocyte meiosis. Required for normal formation of the cleavage furrow and for polar body extrusion during female germ cell meiosis. Also acts in the nucleus: together with SPIRE1 and SPIRE2, promotes assembly of nuclear actin filaments in response to DNA damage in order to facilitate movement of chromatin and repair factors after DNA damage. In Mus musculus (Mouse), this protein is Protein spire homolog 2 (Spire2).